The sequence spans 212 residues: MSGMFITFEGPEGAGKTTVIRKVHEEMERQGYAVMATREPGGIDIAEQIREVILNEKNTKMDAKTEALLYAAARRQHLAEKVEPALQRGETVLCDRFVDSSLAYQGYARGLGIDQVRSINDFAIDGTMPQMTIYFSITPEEGLKRIHANQGREKNRLDMETLNFHQLVREGYELLIAQSPERFHVVDASKPMQDVYEEVLRVIQDTLKKNQI.

Residue 10-17 (GPEGAGKT) participates in ATP binding.

This sequence belongs to the thymidylate kinase family.

The enzyme catalyses dTMP + ATP = dTDP + ADP. Phosphorylation of dTMP to form dTDP in both de novo and salvage pathways of dTTP synthesis. This Bacillus pumilus (strain SAFR-032) protein is Thymidylate kinase.